Here is a 90-residue protein sequence, read N- to C-terminus: Probable small nuclear ribonucleoprotein E (90 aa).

A Sm domain is found at 14–89 (VNLIFRYLQN…ITLIHAAQQE (76 aa)).

It belongs to the snRNP Sm proteins family. Core component of the spliceosomal U1, U2, U4 and U5 small nuclear ribonucleoproteins (snRNPs), the building blocks of the spliceosome.

Its subcellular location is the nucleus. The protein resides in the cytoplasm. The protein localises to the cytosol. Plays a role in pre-mRNA splicing as a core component of the spliceosomal U1, U2, U4 and U5 small nuclear ribonucleoproteins (snRNPs), the building blocks of the spliceosome. This Caenorhabditis elegans protein is Probable small nuclear ribonucleoprotein E (snr-6).